Reading from the N-terminus, the 338-residue chain is Dihydroorotate dehydrogenase (quinone) (338 aa).

Residues Ala68 to Lys72 and Thr92 each bind FMN. Lys72 lines the substrate pocket. Asn117 to Phe121 contributes to the substrate binding site. FMN is bound by residues Ser147 and Asn180. Asn180 serves as a coordination point for substrate. The active-site Nucleophile is the Ser183. Asn185 lines the substrate pocket. Residues Lys214 and Thr242 each coordinate FMN. Asn243–Thr244 is a binding site for substrate. FMN contacts are provided by residues Gly267, Gly296, and Tyr317–Thr318.

It belongs to the dihydroorotate dehydrogenase family. Type 2 subfamily. Monomer. The cofactor is FMN.

Its subcellular location is the cell membrane. The catalysed reaction is (S)-dihydroorotate + a quinone = orotate + a quinol. The protein operates within pyrimidine metabolism; UMP biosynthesis via de novo pathway; orotate from (S)-dihydroorotate (quinone route): step 1/1. In terms of biological role, catalyzes the conversion of dihydroorotate to orotate with quinone as electron acceptor. This Salinispora arenicola (strain CNS-205) protein is Dihydroorotate dehydrogenase (quinone).